The primary structure comprises 340 residues: Protein jhp_1168 (340 aa).

As to quaternary structure, seems to interact with H.pylori HolB.

Its function is as follows. Could be the functional equivalent of DNA polymerase III delta subunit (HolA). The sequence is that of Protein jhp_1168 from Helicobacter pylori (strain J99 / ATCC 700824) (Campylobacter pylori J99).